The primary structure comprises 944 residues: Thyroid peroxidase (944 aa).

An N-terminal signal peptide occupies residues 1–30 (MVGLVPAGSAWGGRALAVLGVTLLVALARG). The Extracellular segment spans residues 31 to 858 (LLPFFLGGRD…SGRLPKASLV (828 aa)). Asparagine 141 carries N-linked (GlcNAc...) asparagine glycosylation. Cysteine 154 and cysteine 170 are oxidised to a cystine. Aspartate 250 is a binding site for heme b. The active-site Proton acceptor is the histidine 251. Aspartate 252 is a binding site for Ca(2+). 2 cysteine pairs are disulfide-bonded: cysteine 271-cysteine 281 and cysteine 275-cysteine 295. Residue asparagine 316 is glycosylated (N-linked (GlcNAc...) asparagine). Residues threonine 330, phenylalanine 332, aspartate 334, and serine 336 each contribute to the Ca(2+) site. N-linked (GlcNAc...) asparagine glycosylation is present at asparagine 351. The heme b site is built by glutamate 408 and histidine 503. Disulfide bonds link cysteine 606-cysteine 663, cysteine 704-cysteine 729, cysteine 750-cysteine 790, cysteine 776-cysteine 802, cysteine 808-cysteine 822, cysteine 816-cysteine 831, and cysteine 833-cysteine 846. The N-linked (GlcNAc...) asparagine glycan is linked to asparagine 623. Residues 748–804 (DACGLPDSLDNGDVVLCGEAGRRVLVFSCRHGFKLQGPEQVACSPRGGAVRAPVCRD) form the Sushi domain. An EGF-like; calcium-binding domain is found at 804 to 847 (DINECEDASHPPCHGSARCRNTKGGFRCECTDPAVLGEDGTTCV). A helical membrane pass occupies residues 859–879 (SIALGIVLVVGLAGLTWTLVC). Topologically, residues 880 to 944 (RWAHAGRKAS…RSHVAQGSPA (65 aa)) are cytoplasmic. Positions 895–944 (LGGRGAPPPGRGAGQDGASGSLVPPLGPQGRTRAVDPTSSRSHVAQGSPA) are disordered. Over residues 931–944 (PTSSRSHVAQGSPA) the composition is skewed to polar residues.

The protein belongs to the peroxidase family. XPO subfamily. Interacts with DUOX1, DUOX2 and CYBA. It depends on Ca(2+) as a cofactor. The cofactor is heme b. Heme is covalently bound through a H(2)O(2)-dependent autocatalytic process. Heme insertion is important for the delivery of protein at the cell surface. In terms of processing, cleaved in its N-terminal part.

Its subcellular location is the membrane. The catalysed reaction is 2 iodide + H2O2 + 2 H(+) = diiodine + 2 H2O. The enzyme catalyses [thyroglobulin]-L-tyrosine + iodide + H2O2 + H(+) = [thyroglobulin]-3-iodo-L-tyrosine + 2 H2O. It catalyses the reaction [thyroglobulin]-3-iodo-L-tyrosine + iodide + H2O2 + H(+) = [thyroglobulin]-3,5-diiodo-L-tyrosine + 2 H2O. It carries out the reaction 2 [thyroglobulin]-3,5-diiodo-L-tyrosine + H2O2 = [thyroglobulin]-L-thyroxine + [thyroglobulin]-dehydroalanine + 2 H2O. The catalysed reaction is [thyroglobulin]-3-iodo-L-tyrosine + [thyroglobulin]-3,5-diiodo-L-tyrosine + H2O2 = [thyroglobulin]-3,3',5-triiodo-L-thyronine + [thyroglobulin]-dehydroalanine + 2 H2O. The protein operates within hormone biosynthesis; thyroid hormone biosynthesis. Its function is as follows. Iodination and coupling of the hormonogenic tyrosines in thyroglobulin to yield the thyroid hormones T(3) and T(4). This Canis lupus familiaris (Dog) protein is Thyroid peroxidase (TPO).